Reading from the N-terminus, the 1346-residue chain is Pikromycin polyketide synthase component PikAIV (1346 aa).

The stretch at 3 to 32 (SSNEQLVDALRASLKENEELRKESRRRADR) forms a coiled coil. In terms of domain architecture, Ketosynthase family 3 (KS3) spans 34 to 461 (QEPMAIVGMS…GTNAHVVLEE (428 aa)). The interval 37 to 1332 (MAIVGMSCRF…HAPAVAEAVL (1296 aa)) is module 6. Catalysis depends on for beta-ketoacyl synthase activity residues cysteine 207, histidine 342, and histidine 382. The acyltransferase stretch occupies residues 562 to 844 (FVFPGQGTQW…VLTMTLPDKV (283 aa)). The Acyl-ester intermediate; for acyltransferase activity role is filled by serine 652. A Carrier domain is found at 945–1020 (SAVLAMVMRQ…ALAERISDEL (76 aa)). The residue at position 980 (serine 980) is an O-(pantetheine 4'-phosphoryl)serine. A disordered region spans residues 1028 to 1050 (AEPSDHEQAEEEKAAAPAGARSG). Over residues 1030 to 1041 (PSDHEQAEEEKA) the composition is skewed to basic and acidic residues. Residue threonine 1125 coordinates substrate. A thioesterase region spans residues 1127-1332 (ANGGPHEFLR…HAPAVAEAVL (206 aa)). Residue serine 1196 is the Nucleophile; for thioesterase activity of the active site. Positions 1197 and 1224 each coordinate substrate. The active-site Proton acceptor; for thioesterase activity is histidine 1316.

Homodimer. Pikromycin PKS consists of a combination of multimodular (PikAI and PikAII) and monomodular (PikAIII and PikAIV) polypeptides each coding for a functional synthase subunit which participates in 1 (monomodular) or 2 (multimodular) of the six FAS-like elongation steps required for formation of the polyketide. Module 1, 2, 3, 4, 5, and 6 participating in biosynthesis steps 1, 2, 3, 4, 5, and 6, respectively. Pantetheine 4'-phosphate is required as a cofactor.

The catalysed reaction is 5 (S)-methylmalonyl-CoA + malonyl-CoA + 5 NADPH + 11 H(+) = 10-deoxymethynolide + 6 CO2 + 5 NADP(+) + 6 CoA + 2 H2O. It carries out the reaction 6 (S)-methylmalonyl-CoA + malonyl-CoA + 5 NADPH + 12 H(+) = narbonolide + 7 CO2 + 5 NADP(+) + 7 CoA + 2 H2O. Its pathway is antibiotic biosynthesis. Its activity is regulated as follows. Irreversibly inhibited by (2S,3R,4S)-2,4-dihydroxy-3-methylhexyl-phosphonic acid and (3R,4S)-4-hydroxy-3-methyl-2-oxohexyl-phosphonic acid. Its function is as follows. Involved in the biosynthesis of 12- and 14-membered ring macrolactone antibiotics such as methymycin and neomethymycin, and pikromycin and narbomycin, respectively. Component of the pikromycin PKS which catalyzes the biosynthesis of both precursors 10-deoxymethynolide (12-membered ring macrolactone) and narbonolide (14-membered ring macrolactone). Chain elongation through PikAI, PikAII and PikAIII followed by thioesterase catalyzed termination results in the production of 10-deoxymethynolide, while continued elongation through PikAIV, followed by thioesterase (TE) catalyzed cyclization results in the biosynthesis of the narbonolide. The thioesterase can use a series of diketide-N-acetylcysteamine (SNAC) thioesters, but has a strong preference for the 2-methyl-3-ketopentanoyl-SNAC over the stereoisomers of 2-methyl-3-hydroxyacyl-SNAC. The chain is Pikromycin polyketide synthase component PikAIV from Streptomyces venezuelae.